The following is a 212-amino-acid chain: HTH-type transcriptional repressor KstR (212 aa).

Residues 1–11 (MTTSSRSRSST) are compositionally biased toward low complexity. A disordered region spans residues 1–28 (MTTSSRSRSSTVAAATLGEDDLSSNAQK). The region spanning 28–88 (KERRKRILDA…SALAREFERI (61 aa)) is the HTH tetR-type domain. Residues 51-70 (QMRAVAERADVAVGTLYRYF) constitute a DNA-binding region (H-T-H motif).

Homodimer.

In terms of biological role, controls the expression of genes used for utilizing diverse lipids as energy sources. The sequence is that of HTH-type transcriptional repressor KstR (kstR) from Rhodococcus jostii (strain RHA1).